The following is a 516-amino-acid chain: Amino-acid permease BAT1 (516 aa).

12 helical membrane-spanning segments follow: residues 33-53 (LSVF…TGIT), 70-90 (YGWF…AEIC), 113-133 (PLAS…VTAS), 164-184 (VVIG…SLPI), 189-209 (FIGQ…MILI), 232-252 (LGIT…QYTI), 275-295 (GIIS…LGIS), 328-348 (FGSG…VFFC), 383-403 (VPIN…LTSL), 406-426 (IVAF…AYAI), 452-472 (VVGW…SLPV), and 483-503 (YTPV…LFSA).

Belongs to the amino acid-polyamine-organocation (APC) superfamily. Amino acid/choline transporter (ACT) (TC 2.A.3.4) family. In terms of tissue distribution, expressed in roots, rosette leaves, stems, cauline leaves, flowers and siliques.

It is found in the mitochondrion membrane. Functionally, may play a role in primary carbon metabolism and plant growth, by mediating the transport of GABA from the cytosol to mitochondria. When expressed in a heterologous system (yeast), imports Arg and Ala across the plasma membrane and exports Lys and Glu, but does not transport proline. This is Amino-acid permease BAT1 (BAT1) from Arabidopsis thaliana (Mouse-ear cress).